Reading from the N-terminus, the 345-residue chain is Ferrochelatase (345 aa).

Fe cation-binding residues include His-215 and Glu-296.

This sequence belongs to the ferrochelatase family.

Its subcellular location is the cytoplasm. The enzyme catalyses heme b + 2 H(+) = protoporphyrin IX + Fe(2+). It participates in porphyrin-containing compound metabolism; protoheme biosynthesis; protoheme from protoporphyrin-IX: step 1/1. Catalyzes the ferrous insertion into protoporphyrin IX. This is Ferrochelatase from Rhodopseudomonas palustris (strain BisB5).